The sequence spans 659 residues: Alpha-galactosidase D (659 aa).

The N-terminal stretch at 1 to 20 (MRALVPMVVAATALASPAPA) is a signal peptide. N48, N86, and N130 each carry an N-linked (GlcNAc...) asparagine glycan. C125 and C158 are disulfide-bonded. D156 serves as the catalytic Nucleophile. N-linked (GlcNAc...) asparagine glycosylation is present at N183. 201 to 205 (EWGID) is a binding site for substrate. The Proton donor role is filled by D223. Residues N438, N450, N484, N551, and N583 are each glycosylated (N-linked (GlcNAc...) asparagine).

Belongs to the glycosyl hydrolase 27 family.

The protein localises to the secreted. The catalysed reaction is Hydrolysis of terminal, non-reducing alpha-D-galactose residues in alpha-D-galactosides, including galactose oligosaccharides, galactomannans and galactolipids.. Hydrolyzes a variety of simple alpha-D-galactoside as well as more complex molecules such as oligosaccharides and polysaccharides. Active on paranitrophenyl-alpha-galactoside but not on raffinose, locust bean gum and gum guar. The chain is Alpha-galactosidase D (aglD) from Emericella nidulans (strain FGSC A4 / ATCC 38163 / CBS 112.46 / NRRL 194 / M139) (Aspergillus nidulans).